The sequence spans 567 residues: Pyruvate decarboxylase (567 aa).

Positions 28 and 117 each coordinate pyruvate. Residues Thr-393 and 416-418 (GSI) contribute to the thiamine diphosphate site. Asp-447 is a Mg(2+) binding site. Residues 448 to 449 (GS) and 475 to 480 (NDGYTI) each bind thiamine diphosphate. The Mg(2+) site is built by Asn-475 and Gly-477. Pyruvate is bound at residue Glu-481.

The protein belongs to the TPP enzyme family. As to quaternary structure, homotetramer. The cofactor is Mg(2+). Thiamine diphosphate is required as a cofactor.

The protein localises to the cytoplasm. The enzyme catalyses a 2-oxocarboxylate + H(+) = an aldehyde + CO2. It catalyses the reaction pyruvate + H(+) = acetaldehyde + CO2. This Candida albicans (strain SC5314 / ATCC MYA-2876) (Yeast) protein is Pyruvate decarboxylase (PDC11).